A 341-amino-acid chain; its full sequence is UDP-3-O-(3-hydroxymyristoyl)glucosamine N-acyltransferase (341 aa).

The active-site Proton acceptor is H239.

This sequence belongs to the transferase hexapeptide repeat family. LpxD subfamily. In terms of assembly, homotrimer.

It catalyses the reaction a UDP-3-O-[(3R)-3-hydroxyacyl]-alpha-D-glucosamine + a (3R)-hydroxyacyl-[ACP] = a UDP-2-N,3-O-bis[(3R)-3-hydroxyacyl]-alpha-D-glucosamine + holo-[ACP] + H(+). It carries out the reaction UDP-3-O-[(3R)-3-hydroxytetradecanoyl]-alpha-D-glucosamine + (3R)-hydroxytetradecanoyl-[ACP] = UDP-2-N,3-O-bis[(3R)-3-hydroxytetradecanoyl]-alpha-D-glucosamine + holo-[ACP] + H(+). Its pathway is glycolipid biosynthesis; lipid IV(A) biosynthesis; lipid IV(A) from (3R)-3-hydroxytetradecanoyl-[acyl-carrier-protein] and UDP-N-acetyl-alpha-D-glucosamine: step 3/6. Its function is as follows. Catalyzes the N-acylation of UDP-3-O-(hydroxytetradecanoyl)glucosamine using 3-hydroxytetradecanoyl-ACP as the acyl donor. Is involved in the biosynthesis of lipid A, a phosphorylated glycolipid that anchors the lipopolysaccharide to the outer membrane of the cell. The chain is UDP-3-O-(3-hydroxymyristoyl)glucosamine N-acyltransferase from Escherichia coli (strain UTI89 / UPEC).